Here is a 474-residue protein sequence, read N- to C-terminus: tRNA-2-methylthio-N(6)-dimethylallyladenosine synthase (474 aa).

An MTTase N-terminal domain is found at 3 to 120 (KKLHIKTWGC…LPEMINSVRG (118 aa)). Cys12, Cys49, Cys83, Cys157, Cys161, and Cys164 together coordinate [4Fe-4S] cluster. One can recognise a Radical SAM core domain in the interval 143 to 375 (RAEGPTAFVS…QERINQQAMA (233 aa)). Residues 378-441 (RRMLGTTQRI…PNSLRGKVVR (64 aa)) form the TRAM domain.

The protein belongs to the methylthiotransferase family. MiaB subfamily. In terms of assembly, monomer. Requires [4Fe-4S] cluster as cofactor.

It is found in the cytoplasm. The enzyme catalyses N(6)-dimethylallyladenosine(37) in tRNA + (sulfur carrier)-SH + AH2 + 2 S-adenosyl-L-methionine = 2-methylsulfanyl-N(6)-dimethylallyladenosine(37) in tRNA + (sulfur carrier)-H + 5'-deoxyadenosine + L-methionine + A + S-adenosyl-L-homocysteine + 2 H(+). Functionally, catalyzes the methylthiolation of N6-(dimethylallyl)adenosine (i(6)A), leading to the formation of 2-methylthio-N6-(dimethylallyl)adenosine (ms(2)i(6)A) at position 37 in tRNAs that read codons beginning with uridine. In Shigella boydii serotype 18 (strain CDC 3083-94 / BS512), this protein is tRNA-2-methylthio-N(6)-dimethylallyladenosine synthase.